Here is a 250-residue protein sequence, read N- to C-terminus: Pyridoxine 5'-phosphate synthase (250 aa).

3-amino-2-oxopropyl phosphate is bound by residues asparagine 8 and arginine 19. The active-site Proton acceptor is the histidine 44. Residues arginine 46 and histidine 51 each coordinate 1-deoxy-D-xylulose 5-phosphate. Glutamate 76 serves as the catalytic Proton acceptor. Threonine 106 provides a ligand contact to 1-deoxy-D-xylulose 5-phosphate. The Proton donor role is filled by histidine 200. Residues aspartate 201 and 223–224 (GH) contribute to the 3-amino-2-oxopropyl phosphate site.

This sequence belongs to the PNP synthase family. In terms of assembly, homooctamer; tetramer of dimers.

It is found in the cytoplasm. The catalysed reaction is 3-amino-2-oxopropyl phosphate + 1-deoxy-D-xylulose 5-phosphate = pyridoxine 5'-phosphate + phosphate + 2 H2O + H(+). It functions in the pathway cofactor biosynthesis; pyridoxine 5'-phosphate biosynthesis; pyridoxine 5'-phosphate from D-erythrose 4-phosphate: step 5/5. Catalyzes the complicated ring closure reaction between the two acyclic compounds 1-deoxy-D-xylulose-5-phosphate (DXP) and 3-amino-2-oxopropyl phosphate (1-amino-acetone-3-phosphate or AAP) to form pyridoxine 5'-phosphate (PNP) and inorganic phosphate. In Allorhizobium ampelinum (strain ATCC BAA-846 / DSM 112012 / S4) (Agrobacterium vitis (strain S4)), this protein is Pyridoxine 5'-phosphate synthase.